The following is a 306-amino-acid chain: Triplex capsid protein 2 (306 aa).

This sequence belongs to the herpesviridae TRX2 protein family. As to quaternary structure, interacts with TRX1 and major capisd protein/MCP.

Its subcellular location is the virion. The protein localises to the host nucleus. Structural component of the T=16 icosahedral capsid. The capsid is composed of pentamers and hexamers of major capsid protein/MCP, which are linked together by heterotrimers called triplexes. These triplexes are formed by a single molecule of triplex protein 1/TRX1 and two copies of triplex protein 2/TRX2. Additionally, TRX1 is required for efficient transport of TRX2 to the nucleus, which is the site of capsid assembly. The protein is Triplex capsid protein 2 of Alcelaphine herpesvirus 1 (strain C500) (AlHV-1).